A 306-amino-acid polypeptide reads, in one-letter code: tRNA dimethylallyltransferase 1 (306 aa).

13-20 (GPTASGKT) contributes to the ATP binding site. 15 to 20 (TASGKT) contacts substrate. Residues 38–41 (DSRQ) are interaction with substrate tRNA.

It belongs to the IPP transferase family. As to quaternary structure, monomer. It depends on Mg(2+) as a cofactor.

The catalysed reaction is adenosine(37) in tRNA + dimethylallyl diphosphate = N(6)-dimethylallyladenosine(37) in tRNA + diphosphate. In terms of biological role, catalyzes the transfer of a dimethylallyl group onto the adenine at position 37 in tRNAs that read codons beginning with uridine, leading to the formation of N6-(dimethylallyl)adenosine (i(6)A). In Azobacteroides pseudotrichonymphae genomovar. CFP2, this protein is tRNA dimethylallyltransferase 1.